Reading from the N-terminus, the 648-residue chain is DNA gyrase subunit B (648 aa).

Residues 427–541 (TELFIVEGDS…AGYVYIAQPP (115 aa)) form the Toprim domain. Mg(2+) contacts are provided by Glu-433, Asp-506, and Asp-508.

Belongs to the type II topoisomerase GyrB family. Heterotetramer, composed of two GyrA and two GyrB chains. In the heterotetramer, GyrA contains the active site tyrosine that forms a transient covalent intermediate with DNA, while GyrB binds cofactors and catalyzes ATP hydrolysis. The cofactor is Mg(2+). Mn(2+) is required as a cofactor. It depends on Ca(2+) as a cofactor.

It is found in the cytoplasm. It catalyses the reaction ATP-dependent breakage, passage and rejoining of double-stranded DNA.. Its function is as follows. A type II topoisomerase that negatively supercoils closed circular double-stranded (ds) DNA in an ATP-dependent manner to modulate DNA topology and maintain chromosomes in an underwound state. Negative supercoiling favors strand separation, and DNA replication, transcription, recombination and repair, all of which involve strand separation. Also able to catalyze the interconversion of other topological isomers of dsDNA rings, including catenanes and knotted rings. Type II topoisomerases break and join 2 DNA strands simultaneously in an ATP-dependent manner. The chain is DNA gyrase subunit B from Streptococcus pneumoniae serotype 4 (strain ATCC BAA-334 / TIGR4).